The primary structure comprises 124 residues: MSKVAEVLEIVKGLTVLELAELVKAFEEEFGVSAAAPVAVAAAPAAGAAAAEEEKTEFDVILTSAGDKKINVIKVVREITGLGLKEAKELVDGAPKPVKEKIAKEEAESIKAKLTEAGATVDVK.

The protein belongs to the bacterial ribosomal protein bL12 family. As to quaternary structure, homodimer. Part of the ribosomal stalk of the 50S ribosomal subunit. Forms a multimeric L10(L12)X complex, where L10 forms an elongated spine to which 2 to 4 L12 dimers bind in a sequential fashion. Binds GTP-bound translation factors.

Forms part of the ribosomal stalk which helps the ribosome interact with GTP-bound translation factors. Is thus essential for accurate translation. The protein is Large ribosomal subunit protein bL12 of Desulforamulus reducens (strain ATCC BAA-1160 / DSM 100696 / MI-1) (Desulfotomaculum reducens).